Here is a 148-residue protein sequence, read N- to C-terminus: 3-dehydroquinate dehydratase (148 aa).

The active-site Proton acceptor is the tyrosine 23. Residues asparagine 75, histidine 81, and aspartate 88 each contribute to the substrate site. Residue histidine 101 is the Proton donor of the active site. Residues 102-103 (LS) and arginine 112 contribute to the substrate site.

It belongs to the type-II 3-dehydroquinase family. As to quaternary structure, homododecamer.

The enzyme catalyses 3-dehydroquinate = 3-dehydroshikimate + H2O. It functions in the pathway metabolic intermediate biosynthesis; chorismate biosynthesis; chorismate from D-erythrose 4-phosphate and phosphoenolpyruvate: step 3/7. In terms of biological role, catalyzes a trans-dehydration via an enolate intermediate. This Xanthomonas axonopodis pv. citri (strain 306) protein is 3-dehydroquinate dehydratase.